A 959-amino-acid chain; its full sequence is Isoleucine--tRNA ligase (959 aa).

Positions 60–70 match the 'HIGH' region motif; sequence PYANGSLHIGH. E571 contributes to the L-isoleucyl-5'-AMP binding site. Residues 612–616 carry the 'KMSKS' region motif; that stretch reads KMSKS. ATP is bound at residue K615. Residues C928, C931, C948, and C951 each contribute to the Zn(2+) site.

The protein belongs to the class-I aminoacyl-tRNA synthetase family. IleS type 1 subfamily. In terms of assembly, monomer. The cofactor is Zn(2+).

It localises to the cytoplasm. The enzyme catalyses tRNA(Ile) + L-isoleucine + ATP = L-isoleucyl-tRNA(Ile) + AMP + diphosphate. Functionally, catalyzes the attachment of isoleucine to tRNA(Ile). As IleRS can inadvertently accommodate and process structurally similar amino acids such as valine, to avoid such errors it has two additional distinct tRNA(Ile)-dependent editing activities. One activity is designated as 'pretransfer' editing and involves the hydrolysis of activated Val-AMP. The other activity is designated 'posttransfer' editing and involves deacylation of mischarged Val-tRNA(Ile). In Nostoc punctiforme (strain ATCC 29133 / PCC 73102), this protein is Isoleucine--tRNA ligase.